The primary structure comprises 314 residues: Ribose-phosphate pyrophosphokinase (314 aa).

Residues 37–39 and 96–97 contribute to the ATP site; these read DGE and RQ. 2 residues coordinate Mg(2+): H131 and D170. The active site involves K194. D-ribose 5-phosphate is bound by residues R196, D220, and 224–228; that span reads DTGGT.

It belongs to the ribose-phosphate pyrophosphokinase family. Class I subfamily. Homohexamer. Mg(2+) serves as cofactor.

The protein localises to the cytoplasm. The enzyme catalyses D-ribose 5-phosphate + ATP = 5-phospho-alpha-D-ribose 1-diphosphate + AMP + H(+). It functions in the pathway metabolic intermediate biosynthesis; 5-phospho-alpha-D-ribose 1-diphosphate biosynthesis; 5-phospho-alpha-D-ribose 1-diphosphate from D-ribose 5-phosphate (route I): step 1/1. Functionally, involved in the biosynthesis of the central metabolite phospho-alpha-D-ribosyl-1-pyrophosphate (PRPP) via the transfer of pyrophosphoryl group from ATP to 1-hydroxyl of ribose-5-phosphate (Rib-5-P). This is Ribose-phosphate pyrophosphokinase from Vibrio parahaemolyticus serotype O3:K6 (strain RIMD 2210633).